Reading from the N-terminus, the 354-residue chain is Kelch domain-containing protein 8B (354 aa).

Kelch repeat units follow at residues 1–31 (MSAG…HQDE), 32–79 (HLLV…VLGK), 81–127 (VLVV…ERDG), 128–175 (MVYA…LHGN), 176–222 (KIYV…MAEG), 224–281 (VFSL…SLGG), 282–329 (HIVA…QAGP), and 331–354 (LFVI…RDGV).

Its subcellular location is the cytoplasm. The protein resides in the midbody. In terms of biological role, involved in pinching off the separated nuclei at the cleavage furrow and in cytokinesis. Required for mitotic integrity and maintenance of chromosomal stability. Protects cells against mitotic errors, centrosomal amplification, micronucleus formation and aneuploidy. Plays a key role of midbody function involving abscission of the daughter cells during cytokinesis and appropriate chromosomal and nuclear segregation into the daughter cells. The polypeptide is Kelch domain-containing protein 8B (KLHDC8B) (Pongo abelii (Sumatran orangutan)).